Consider the following 996-residue polypeptide: ER membrane protein complex subunit 1 (996 aa).

An N-terminal signal peptide occupies residues 1–22 (MAAEWASRFWLWAALLIPVAAV). Residues 23–965 (YEDQVGKFDW…FDVLKDDYDY (943 aa)) are Lumenal-facing. Cystine bridges form between Cys-227/Cys-237 and Cys-338/Cys-368. N-linked (GlcNAc...) asparagine glycosylation occurs at Asn-916. A helical transmembrane segment spans residues 966–986 (VLISSVLFGLVFATMITKRLA). At 987–996 (QVKLLNRAWR) the chain is on the cytoplasmic side.

Belongs to the EMC1 family. Component of the ER membrane protein complex (EMC).

Its subcellular location is the endoplasmic reticulum membrane. Part of the endoplasmic reticulum membrane protein complex (EMC) that enables the energy-independent insertion into endoplasmic reticulum membranes of newly synthesized membrane proteins. Preferentially accommodates proteins with transmembrane domains that are weakly hydrophobic or contain destabilizing features such as charged and aromatic residues. Involved in the cotranslational insertion of multi-pass membrane proteins in which stop-transfer membrane-anchor sequences become ER membrane spanning helices. It is also required for the post-translational insertion of tail-anchored/TA proteins in endoplasmic reticulum membranes. By mediating the proper cotranslational insertion of N-terminal transmembrane domains in an N-exo topology, with translocated N-terminus in the lumen of the ER, controls the topology of multi-pass membrane proteins like the G protein-coupled receptors. By regulating the insertion of various proteins in membranes, it is indirectly involved in many cellular processes. The polypeptide is ER membrane protein complex subunit 1 (EMC1) (Pongo abelii (Sumatran orangutan)).